The sequence spans 139 residues: Protein cornichon homolog 4 (139 aa).

A run of 3 helical transmembrane segments spans residues 5–25 (VFVF…YFII), 57–77 (IVTV…NLPV), and 118–138 (LGFH…ALIN).

The protein belongs to the cornichon family. As to quaternary structure, interacts with Sec23/24 complex components SEC24B and SEC24D. Interacts with CCR5. Interacts with ADRB2 in the early secretory pathway.

The protein resides in the membrane. The protein localises to the endoplasmic reticulum. Its subcellular location is the endoplasmic reticulum-Golgi intermediate compartment. In terms of biological role, involved in G protein-coupled receptors (GPCRs) trafficking from the endoplasmic reticulum to the cell surface; it promotes the exit of GPCRs from the early secretory pathway, likely through interaction with the COPII machinery. This chain is Protein cornichon homolog 4 (CNIH4), found in Homo sapiens (Human).